The sequence spans 732 residues: Prolyl endopeptidase-like (732 aa).

Catalysis depends on charge relay system residues Ser575, Asp661, and His707.

The protein belongs to the peptidase S9A family. Homodimer.

Its subcellular location is the cytoplasm. The protein localises to the cytosol. In terms of biological role, serine peptidase whose precise substrate specificity remains unclear. Does not cleave peptides after a arginine or lysine residue. Regulates trans-Golgi network morphology and sorting by regulating the membrane binding of the AP-1 complex. May play a role in the regulation of synaptic vesicle exocytosis. This chain is Prolyl endopeptidase-like (PREPL), found in Gallus gallus (Chicken).